The sequence spans 260 residues: 3'-5' ssDNA/RNA exonuclease TatD (260 aa).

Glu-91, His-127, and His-152 together coordinate a divalent metal cation.

Belongs to the metallo-dependent hydrolases superfamily. TatD-type hydrolase family. TatD subfamily. As to quaternary structure, monomer. It depends on Mg(2+) as a cofactor.

It localises to the cytoplasm. In terms of biological role, 3'-5' exonuclease that prefers single-stranded DNA and RNA. May play a role in the H(2)O(2)-induced DNA damage repair. This is 3'-5' ssDNA/RNA exonuclease TatD from Enterobacter sp. (strain 638).